The chain runs to 302 residues: Dihydroorotate dehydrogenase B (NAD(+)), catalytic subunit (302 aa).

FMN-binding positions include Ser23 and 47 to 48 (KG). Substrate-binding positions include Lys47 and 71–75 (NSVGL). FMN is bound by residues Asn101 and Asn128. A substrate-binding site is contributed by Asn128. The active-site Nucleophile is Cys131. Residues Lys166 and Ile192 each contribute to the FMN site. 193–194 (NT) contacts substrate. FMN contacts are provided by residues Gly218, 244-245 (GG), and 266-267 (GT).

The protein belongs to the dihydroorotate dehydrogenase family. Type 1 subfamily. As to quaternary structure, heterotetramer of 2 PyrK and 2 PyrD type B subunits. It depends on FMN as a cofactor.

The protein localises to the cytoplasm. It carries out the reaction (S)-dihydroorotate + NAD(+) = orotate + NADH + H(+). Its pathway is pyrimidine metabolism; UMP biosynthesis via de novo pathway; orotate from (S)-dihydroorotate (NAD(+) route): step 1/1. Functionally, catalyzes the conversion of dihydroorotate to orotate with NAD(+) as electron acceptor. In Alkaliphilus metalliredigens (strain QYMF), this protein is Dihydroorotate dehydrogenase B (NAD(+)), catalytic subunit (pyrD).